Here is a 295-residue protein sequence, read N- to C-terminus: UDP-N-acetylenolpyruvoylglucosamine reductase (295 aa).

An FAD-binding PCMH-type domain is found at 23–188 (QVGGPADFLA…ISAKFALKPG (166 aa)). R167 is a catalytic residue. The active-site Proton donor is the S217. E287 is a catalytic residue.

Belongs to the MurB family. Requires FAD as cofactor.

It localises to the cytoplasm. The catalysed reaction is UDP-N-acetyl-alpha-D-muramate + NADP(+) = UDP-N-acetyl-3-O-(1-carboxyvinyl)-alpha-D-glucosamine + NADPH + H(+). It functions in the pathway cell wall biogenesis; peptidoglycan biosynthesis. Cell wall formation. This Streptococcus equi subsp. zooepidemicus (strain H70) protein is UDP-N-acetylenolpyruvoylglucosamine reductase.